Here is a 465-residue protein sequence, read N- to C-terminus: MTPPRKLHIKSYGCQMNVYDAQRMVDTLAPEGFVETASAEDADLVILNTCHIREKASEKVYSELGRLRVAKDEAARGGRAMQIAVAGCVAQAEGEEIVRRAPVVDVVVGPQSYHHLPELLKRAGNEGRAVETEFPAADKFGFLAQPKPDAIRARGISAFVTVQEGCDKFCTFCVVPYTRGAEVSRPVARIVDDVKRLADNGVRELTLIGQNVNAYHGDGPDGKSWPLGRLLEHLAGIPGIARLRYSTSHPRDVDDSLIAAHRDLAALMPFVHLPVQSGSDRILAAMNRKHTADDYRRVIDRFRAARQDIAFSSDFIVGFPGESEQDFLATLALVTQIGYAAAYSFKYSARPGTPAADMQETVSPAEMDQRLERLQELIDSQQSAFNKAAIGSTVDVLFERPARKDGQIVGRTAFLQPAHVMASPGIIGQILPVRIDSLERYSFLGELVTPRVAREPALSPIATGA.

In terms of domain architecture, MTTase N-terminal spans 5–125 (RKLHIKSYGC…LPELLKRAGN (121 aa)). 6 residues coordinate [4Fe-4S] cluster: Cys-14, Cys-50, Cys-88, Cys-166, Cys-170, and Cys-173. The 233-residue stretch at 152-384 (RARGISAFVT…QELIDSQQSA (233 aa)) folds into the Radical SAM core domain. One can recognise a TRAM domain in the interval 387-449 (KAAIGSTVDV…RYSFLGELVT (63 aa)).

This sequence belongs to the methylthiotransferase family. MiaB subfamily. As to quaternary structure, monomer. [4Fe-4S] cluster serves as cofactor.

The protein resides in the cytoplasm. The enzyme catalyses N(6)-dimethylallyladenosine(37) in tRNA + (sulfur carrier)-SH + AH2 + 2 S-adenosyl-L-methionine = 2-methylsulfanyl-N(6)-dimethylallyladenosine(37) in tRNA + (sulfur carrier)-H + 5'-deoxyadenosine + L-methionine + A + S-adenosyl-L-homocysteine + 2 H(+). Catalyzes the methylthiolation of N6-(dimethylallyl)adenosine (i(6)A), leading to the formation of 2-methylthio-N6-(dimethylallyl)adenosine (ms(2)i(6)A) at position 37 in tRNAs that read codons beginning with uridine. In Bradyrhizobium diazoefficiens (strain JCM 10833 / BCRC 13528 / IAM 13628 / NBRC 14792 / USDA 110), this protein is tRNA-2-methylthio-N(6)-dimethylallyladenosine synthase.